The sequence spans 93 residues: Small ribosomal subunit protein uS19 (93 aa).

It belongs to the universal ribosomal protein uS19 family.

Functionally, protein S19 forms a complex with S13 that binds strongly to the 16S ribosomal RNA. The polypeptide is Small ribosomal subunit protein uS19 (Citrifermentans bemidjiense (strain ATCC BAA-1014 / DSM 16622 / JCM 12645 / Bem) (Geobacter bemidjiensis)).